The sequence spans 501 residues: MSNEEINIHEAEEQLSEQEMLRRQKLAELQEAGKDPFDVYKVERTHSSADVKDNFEELEGKEVKVAGRLMSKRGQGKVVFADLADLPGKIQLFIKIDNVGEEALKEFKTFDLGDWVAATGEVFKTKMGEVSVKVTSFELICKSLKPLPEKWHGLKDPDLRYRQREVDIITNPEVKDTFIKRSQIVKAIREFLDNRGFLEVDTPILSPIAGGAAARPFITHHNALDIDMYLRIATELYLKRLIVAGFEKVYEMGKNFRNEGVSVRHNPEFTAIELYEAYADYNDMMEIMENMIAYVCEKVNGSTKVTYEGTEIDFTPPWRRITMVDAVKEFAGIDFNEIKSDEEAQAIAKEKNLEFPKPLDKVTKGEVLNMLFEEYGEDKLIQPTFLIDYPVEISPLTKKKRGNEMFTERFEGFVYGREVCNAYSELNDPIVQRERFEQQAREREYGDDEAYMLDEEFMSALETGMPPTGGLGIGIDRMIMFLTDSSSIRDVILFPTMKPQK.

2 residues coordinate Mg(2+): Glu-411 and Glu-418.

The protein belongs to the class-II aminoacyl-tRNA synthetase family. As to quaternary structure, homodimer. It depends on Mg(2+) as a cofactor.

The protein resides in the cytoplasm. The catalysed reaction is tRNA(Lys) + L-lysine + ATP = L-lysyl-tRNA(Lys) + AMP + diphosphate. This is Lysine--tRNA ligase from Clostridium perfringens (strain ATCC 13124 / DSM 756 / JCM 1290 / NCIMB 6125 / NCTC 8237 / Type A).